A 444-amino-acid polypeptide reads, in one-letter code: MKILLIGGGARESAIAHALKKNEEVKLYTLMKNKNPGIARLSEEIKLAKETDLDAVKEFAEKVKPDLAVIGPEAPLGEGVVDLLEEMGISAVGPKKLAAQIETNKEFMRNLFKKYNIKGSLMYKAFEEYGEELESFIDELTEKGIKAVVKPVGLTGGKGVKVVGEQLKDNEEAKKYAKEIFETGLGGGKVLIEEKLEGVEFTLHGFVDGDTIKFTPFVQDHPHALEGDEGSITGGMGSYSCPDHKLPFMTEEDVKLAKEIMEETVKALKEEVGGYKGILYGQFMLTKEGPKIIEYNARFGDPEAMNLLAILKNDFLEVCEAIVNKKLKDIDVEFENKATVCKYVVPKGYPDNPVRGEPITVDEEAIKKTGAILHYASVNEDNGSLYMTGSRAVAVVGVADTIEEAERIAEEATKYIKGEVYHRSDIGKKELIKKRIEKMNELRR.

Residues 109–324 (RNLFKKYNIK…FLEVCEAIVN (216 aa)) form the ATP-grasp domain. 140–202 (LTEKGIKAVV…EEKLEGVEFT (63 aa)) provides a ligand contact to ATP. Mg(2+) contacts are provided by Q282, E294, and N296. The Mn(2+) site is built by Q282, E294, and N296.

This sequence belongs to the GARS family. It depends on Mg(2+) as a cofactor. Mn(2+) serves as cofactor.

The enzyme catalyses 5-phospho-beta-D-ribosylamine + glycine + ATP = N(1)-(5-phospho-beta-D-ribosyl)glycinamide + ADP + phosphate + H(+). It participates in purine metabolism; IMP biosynthesis via de novo pathway; N(1)-(5-phospho-D-ribosyl)glycinamide from 5-phospho-alpha-D-ribose 1-diphosphate: step 2/2. In Methanocaldococcus jannaschii (strain ATCC 43067 / DSM 2661 / JAL-1 / JCM 10045 / NBRC 100440) (Methanococcus jannaschii), this protein is Phosphoribosylamine--glycine ligase.